The following is an 83-amino-acid chain: Short neurotoxin VAN-10 (83 aa).

Positions 1–21 are cleaved as a signal peptide; sequence MKTLLLTLVVVTIVCLDLGYT. Intrachain disulfides connect C24/C45, C38/C62, C64/C75, and C76/C81.

This sequence belongs to the three-finger toxin family. Short-chain subfamily. Type I alpha-neurotoxin sub-subfamily. As to expression, expressed by the venom gland.

The protein resides in the secreted. In terms of biological role, binds to muscle nicotinic acetylcholine receptor (nAChR) and inhibit acetylcholine from binding to the receptor, thereby impairing neuromuscular transmission. This chain is Short neurotoxin VAN-10, found in Laticauda laticaudata (Blue-ringed sea krait).